The chain runs to 278 residues: Protein lyl-1 (278 aa).

The interval 1 to 46 (MCPPQARAEVGSAMTEKTEMVCASSPAPAPPSKPASPGPLSTEEVD) is disordered. Pro residues predominate over residues 27–37 (APAPPSKPASP). Residues 149–201 (ARRVFTNSRERWRQQHVNGAFAELRKLLPTHPPDRKLSKNEVLRLAMKYIGFL) enclose the bHLH domain. The tract at residues 212–278 (LTSGPSAPGS…EQTSLSPEVR (67 aa)) is disordered. A compositionally biased stretch (polar residues) spans 269 to 278 (EQTSLSPEVR). Position 274 is a phosphoserine (Ser-274).

In terms of assembly, efficient DNA binding requires dimerization with another bHLH protein.

The protein localises to the nucleus. This Mus musculus (Mouse) protein is Protein lyl-1 (Lyl1).